Here is a 1354-residue protein sequence, read N- to C-terminus: Tensin homolog (1354 aa).

A Phosphatase tensin-type domain is found at 38–207; that stretch reads MKDRKEGVQV…GYFSSLLSGR (170 aa). Cysteine 144 serves as the catalytic Phosphocysteine intermediate. The C2 tensin-type domain occupies 212–337; that stretch reads SDPLYLHNII…VTVELVVSHT (126 aa). Disordered regions lie at residues 380 to 442, 597 to 616, 638 to 660, 692 to 720, 734 to 754, 794 to 879, and 1015 to 1035; these read EYSE…DVVP, STLQRRPKPPARSGSYRTLN, SNTAPLPPPRRQEQHAGTRSVQL, DVRGGQQQQQEQHNASNDFNFSNTLNNTP, SVTTPRNHHFSTPSREQEADA, AANN…DRQR, and NGERGGSGHAAGGGGGGHNGY. A compositionally biased stretch (polar residues) spans 391–401; the sequence is SSKSANPINNN. Positions 408–417 are enriched in pro residues; that stretch reads VGPPVPPKPS. 3 stretches are compositionally biased toward polar residues: residues 704–720, 734–747, and 794–804; these read HNASNDFNFSNTLNNTP, SVTTPRNHHFSTPS, and AANNDENQHNL. The segment covering 821–843 has biased composition (basic and acidic residues); it reads AEFRREEERLRNTRSPYGEERWR. Residues 1017–1033 show a composition bias toward gly residues; sequence ERGGSGHAAGGGGGGHN. One can recognise an SH2 domain in the interval 1083–1187; it reads WYKPTISREQ…ALPTKLVLPD (105 aa). Residues 1209–1353 enclose the PTB domain; it reads ACNVVYVGSV…NKVMLAQKNR (145 aa).

This sequence belongs to the PTEN phosphatase protein family. As to quaternary structure, may interact (via SH2 domain) with receptor svh-2 (when tyrosine-phosphorylated). May interact (via C-terminus) with integrin pat-3. In terms of tissue distribution, expressed in ventral motor neurons, including ventral and dorsal D-type neurons, and in a subset of cells in the head.

Its subcellular location is the cell projection. The protein localises to the axon. The enzyme catalyses O-phospho-L-tyrosyl-[protein] + H2O = L-tyrosyl-[protein] + phosphate. In terms of biological role, probable phosphatase which regulates axon regeneration after injury by linking the svh-2 and integrin signaling pathways. Functionally, not involved in axon regeneration after injury. This Caenorhabditis elegans protein is Tensin homolog.